The primary structure comprises 198 residues: Recombination protein RecR (198 aa).

The C4-type zinc-finger motif lies at cysteine 57–cysteine 72. A Toprim domain is found at serine 80–proline 175.

Belongs to the RecR family.

Functionally, may play a role in DNA repair. It seems to be involved in an RecBC-independent recombinational process of DNA repair. It may act with RecF and RecO. The polypeptide is Recombination protein RecR (Bacillus anthracis (strain A0248)).